Consider the following 454-residue polypeptide: Bifunctional protein GlmU (454 aa).

Positions 1 to 225 (MNIVILAAGM…IWETLGVNSK (225 aa)) are pyrophosphorylase. Residues 6–9 (LAAG), Lys20, Gln71, 76–77 (GT), 98–100 (YGD), Gly135, Glu150, Asn165, and Asn223 contribute to the UDP-N-acetyl-alpha-D-glucosamine site. Mg(2+) is bound at residue Asp100. A Mg(2+)-binding site is contributed by Asn223. The linker stretch occupies residues 226 to 246 (LQLAEVERIHQGNQARRLLEA). Positions 247-454 (GVTLLDPARI…WQRPVKQPKK (208 aa)) are N-acetyltransferase. Positions 329 and 347 each coordinate UDP-N-acetyl-alpha-D-glucosamine. His359 functions as the Proton acceptor in the catalytic mechanism. Tyr362 and Asn373 together coordinate UDP-N-acetyl-alpha-D-glucosamine. Acetyl-CoA is bound by residues Ala376, 382-383 (NY), Ser401, Ala419, and Arg436.

In the N-terminal section; belongs to the N-acetylglucosamine-1-phosphate uridyltransferase family. It in the C-terminal section; belongs to the transferase hexapeptide repeat family. Homotrimer. Mg(2+) serves as cofactor.

The protein resides in the cytoplasm. The enzyme catalyses alpha-D-glucosamine 1-phosphate + acetyl-CoA = N-acetyl-alpha-D-glucosamine 1-phosphate + CoA + H(+). The catalysed reaction is N-acetyl-alpha-D-glucosamine 1-phosphate + UTP + H(+) = UDP-N-acetyl-alpha-D-glucosamine + diphosphate. The protein operates within nucleotide-sugar biosynthesis; UDP-N-acetyl-alpha-D-glucosamine biosynthesis; N-acetyl-alpha-D-glucosamine 1-phosphate from alpha-D-glucosamine 6-phosphate (route II): step 2/2. Its pathway is nucleotide-sugar biosynthesis; UDP-N-acetyl-alpha-D-glucosamine biosynthesis; UDP-N-acetyl-alpha-D-glucosamine from N-acetyl-alpha-D-glucosamine 1-phosphate: step 1/1. It participates in bacterial outer membrane biogenesis; LPS lipid A biosynthesis. Functionally, catalyzes the last two sequential reactions in the de novo biosynthetic pathway for UDP-N-acetylglucosamine (UDP-GlcNAc). The C-terminal domain catalyzes the transfer of acetyl group from acetyl coenzyme A to glucosamine-1-phosphate (GlcN-1-P) to produce N-acetylglucosamine-1-phosphate (GlcNAc-1-P), which is converted into UDP-GlcNAc by the transfer of uridine 5-monophosphate (from uridine 5-triphosphate), a reaction catalyzed by the N-terminal domain. The protein is Bifunctional protein GlmU of Cupriavidus necator (strain ATCC 17699 / DSM 428 / KCTC 22496 / NCIMB 10442 / H16 / Stanier 337) (Ralstonia eutropha).